The following is a 266-amino-acid chain: Undecaprenyl-diphosphatase (266 aa).

The next 7 membrane-spanning stretches (helical) occupy residues 39-59, 86-106, 112-132, 147-167, 189-209, 216-236, and 246-266; these read PGAS…AYYF, SIFI…IFIP, VLRS…FMYL, NFSN…PGVS, FSFL…FVSS, LGFF…LLAI, and NGLK…LLNL.

Belongs to the UppP family.

It is found in the cell inner membrane. The enzyme catalyses di-trans,octa-cis-undecaprenyl diphosphate + H2O = di-trans,octa-cis-undecaprenyl phosphate + phosphate + H(+). Its function is as follows. Catalyzes the dephosphorylation of undecaprenyl diphosphate (UPP). Confers resistance to bacitracin. In Prochlorococcus marinus (strain MIT 9301), this protein is Undecaprenyl-diphosphatase.